The chain runs to 405 residues: K(+)/H(+) antiporter subunit KhtU (405 aa).

Transmembrane regions (helical) follow at residues 3–23 (HLVFEVGTALVLVAIASVIAN), 29–49 (IIPFLIVLGMLVGPHAPKMGI), 60–80 (IIEFFGRMGVLFLLFYLGLEF), 85–105 (LIKSGKSIAVGGTIYILINFS), 108–128 (LLYGFITGFSFLEVLILAGVI), 153–173 (LILGIIMFEDIFLAVYLSVVS), 183–203 (VGSALLSILIAFGYMLLFFIA), 222–242 (VFIIVIFAALFFIAGFSETIH), 268–288 (LVVPFRDFFGAMFFFSFGLSI), 297–317 (VWLALGAVILTILGNFIAGMV), 332–352 (IGLTIVSRGEFSIIVANLGIA), and 357–377 (ATLKPFAALYVLILAILGPLV).

It belongs to the monovalent cation:proton antiporter 2 (CPA2) transporter (TC 2.A.37) family. As to quaternary structure, the transporter is composed of the integral membrane protein KhtU and the regulatory protein KhtT.

The protein localises to the cell membrane. Its activity is regulated as follows. Potassium antiport activity requires the presence of KhtT. Activity is also modulated by KhtS. Has higher activity at alkaline pH. Its function is as follows. Potassium/proton antiporter that mediates the efflux of potassium ions from the cell. Can also mediate rubidium/proton antiport, but has no permeability for sodium or lithium ions. In the absence of KhtT, does not have antiport activity, but can catalyze potassium efflux. Involved in protection of the cell from methylglyoxal, a toxic by-product of glycolysis, via activation by S-lactoyl-BSH of the antiporter activity, leading to cytoplasmic acidification and methylglyoxal resistance. This is K(+)/H(+) antiporter subunit KhtU from Bacillus subtilis (strain 168).